A 570-amino-acid polypeptide reads, in one-letter code: Proline--tRNA ligase (570 aa).

It belongs to the class-II aminoacyl-tRNA synthetase family. ProS type 1 subfamily. Homodimer.

It is found in the cytoplasm. The catalysed reaction is tRNA(Pro) + L-proline + ATP = L-prolyl-tRNA(Pro) + AMP + diphosphate. In terms of biological role, catalyzes the attachment of proline to tRNA(Pro) in a two-step reaction: proline is first activated by ATP to form Pro-AMP and then transferred to the acceptor end of tRNA(Pro). As ProRS can inadvertently accommodate and process non-cognate amino acids such as alanine and cysteine, to avoid such errors it has two additional distinct editing activities against alanine. One activity is designated as 'pretransfer' editing and involves the tRNA(Pro)-independent hydrolysis of activated Ala-AMP. The other activity is designated 'posttransfer' editing and involves deacylation of mischarged Ala-tRNA(Pro). The misacylated Cys-tRNA(Pro) is not edited by ProRS. This Shewanella sp. (strain MR-4) protein is Proline--tRNA ligase.